The chain runs to 607 residues: Glutamine--fructose-6-phosphate aminotransferase [isomerizing] (607 aa).

Cys-2 serves as the catalytic Nucleophile; for GATase activity. One can recognise a Glutamine amidotransferase type-2 domain in the interval Cys-2–Asp-218. 2 consecutive SIS domains span residues Phe-280 to Lys-424 and Ile-457 to Pro-597. Residue Lys-602 is the For Fru-6P isomerization activity of the active site.

Homodimer.

The protein resides in the cytoplasm. It carries out the reaction D-fructose 6-phosphate + L-glutamine = D-glucosamine 6-phosphate + L-glutamate. Its function is as follows. Catalyzes the first step in hexosamine metabolism, converting fructose-6P into glucosamine-6P using glutamine as a nitrogen source. This Fusobacterium nucleatum subsp. nucleatum (strain ATCC 25586 / DSM 15643 / BCRC 10681 / CIP 101130 / JCM 8532 / KCTC 2640 / LMG 13131 / VPI 4355) protein is Glutamine--fructose-6-phosphate aminotransferase [isomerizing].